Here is a 605-residue protein sequence, read N- to C-terminus: Tungsten-containing aldehyde ferredoxin oxidoreductase (605 aa).

Arg76, Asn93, Gly95, Arg182, Ala183, Gly185, and Arg186 together coordinate tungstopterin. The [4Fe-4S] cluster site is built by Cys288, Cys291, and Cys295. Residues Asp338, Leu342, Asp343, Arg444, Lys450, Asp489, and Leu493 each coordinate tungstopterin. Cys494 contributes to the [4Fe-4S] cluster binding site. Leu495 contributes to the tungstopterin binding site.

It belongs to the AOR/FOR family. Monomer. Homodimer. It depends on [4Fe-4S] cluster as a cofactor. Tungstopterin is required as a cofactor.

It carries out the reaction an aldehyde + 2 oxidized [2Fe-2S]-[ferredoxin] + H2O = a carboxylate + 2 reduced [2Fe-2S]-[ferredoxin] + 3 H(+). With respect to regulation, inhibited by arsenite, iodoacetate and cyanide. Functionally, aldehyde ferredoxin oxidoreductase with a broad substrate specificity. Catalyzes the oxidation of a range of aliphatic aldehydes to their corresponding carboxylic acids. In vitro can use crotonaldehyde, acetaldehyde, formaldehyde, butyraldehyde or glyceraldehyde as substrate, using methyl viologen or ferredoxin, but not NAD(P), as the electron acceptor. Does not oxidize glucose or glyceraldehyde 3-phosphate. May be involved in a pyroglycolytic pathway. In Pyrococcus furiosus (strain ATCC 43587 / DSM 3638 / JCM 8422 / Vc1), this protein is Tungsten-containing aldehyde ferredoxin oxidoreductase.